The following is a 750-amino-acid chain: MIIRSPESEVKIVVDRDPVKTSFEEWAKPGHFSRTIAKGPDTTTWIWNLHADAHDFDSHTSDLEEISRKVFSAHFGQLSIIFLWLSGMYFHGARFSNYEAWLSDPTHIGPSAQVVWPIVGQEILNGDVGGGFRGIQITSGFFQLWRASGITNELQLYCTAIGALVFAGLMLFAGWFHYHKAAPKLSWFQDVESMLNHHLAGLLGLGSLSWAGHQVHVSLPINQFLDAGVDPKEIPLPHEFILNRDLLAQLYPSFAEGATPLFTLNWSKYAEFLTFRGGLDPTTGGLWLTDIVHHHLAIAILFLIAGHMYRTNWGIGHSLKDILEAHKGPFTGQGHKGLYEILTTSWHAQLSLNLAMLGSLTIVVAHHMYSMPPYPYLATDYGTQLSLFTHHMWIGGFLIVGAAAHAAIFMVRDYDPTTRYNDLLDRVLRHRDAIISHLNWACIFLGFHSFGLYIHNDTMSALGRPQDMFSDTAIQLQPIFAQWIQNTHALAPSATAPGAIASTSLTWGGADLVAVGGKVALLPIPLGTADFLVHHIHAFTIHVTVLILLKGVLFARSSRLIPDKANLGFRFPCDGPGRGGTCQVSAWDHVFLGLFWMYNAISVVIFHFSWKMQSDVWGSISDQGVVTHITGGNFAQSSITINGWLRDFLWAQASQVIQSYGSSLSAYGLFFLGAHFVWAFSLMFLFSGRGYWQELIESIVWAHNKLKVAPATQPRALSIVQGRAVGVTHYLLGGIATTWAFFLARIIAVG.

8 helical membrane-spanning segments follow: residues Val70–Ala93, Leu156–His179, Leu195–Leu219, Ile291–Tyr309, Trp346–Tyr369, Leu385–Val411, Ala433–His455, and Phe531–Leu549. [4Fe-4S] cluster-binding residues include Cys573 and Cys582. Transmembrane regions (helical) follow at residues His589–Trp610 and Leu664–Phe686. Residue His675 coordinates chlorophyll a'. Chlorophyll a contacts are provided by Met683 and Tyr691. Trp692 contacts phylloquinone. The helical transmembrane segment at Ala724–Ala744 threads the bilayer.

The protein belongs to the PsaA/PsaB family. The PsaA/B heterodimer binds the P700 chlorophyll special pair and subsequent electron acceptors. PSI consists of a core antenna complex that captures photons, and an electron transfer chain that converts photonic excitation into a charge separation. The eukaryotic PSI reaction center is composed of at least 11 subunits. Requires P700 is a chlorophyll a/chlorophyll a' dimer, A0 is one or more chlorophyll a, A1 is one or both phylloquinones and FX is a shared 4Fe-4S iron-sulfur center. as cofactor.

It localises to the plastid. It is found in the chloroplast thylakoid membrane. It carries out the reaction reduced [plastocyanin] + hnu + oxidized [2Fe-2S]-[ferredoxin] = oxidized [plastocyanin] + reduced [2Fe-2S]-[ferredoxin]. In terms of biological role, psaA and PsaB bind P700, the primary electron donor of photosystem I (PSI), as well as the electron acceptors A0, A1 and FX. PSI is a plastocyanin-ferredoxin oxidoreductase, converting photonic excitation into a charge separation, which transfers an electron from the donor P700 chlorophyll pair to the spectroscopically characterized acceptors A0, A1, FX, FA and FB in turn. Oxidized P700 is reduced on the lumenal side of the thylakoid membrane by plastocyanin. This is Photosystem I P700 chlorophyll a apoprotein A1 from Piper cenocladum (Ant piper).